We begin with the raw amino-acid sequence, 291 residues long: Mitochondrial thiamine pyrophosphate carrier 1 (291 aa).

6 consecutive transmembrane segments (helical) span residues 12–31, 83–99, 120–141, 167–191, 214–230, and 265–282; these read GATASVYHTLVAGSVSGAVA, IMYILYGATQFTSYSMF, SLIVGTSAGLTSLIVTYPFDLL, GGLAGLYMGAKPTLLSLGLNSGLMF, FCGFFAGASSKGITFPL, and GFGISLIKTAPTSAVSLF. 3 Solcar repeats span residues 15 to 102, 115 to 200, and 207 to 290; these read ASVY…FSKA, RPSN…AREV, and NIPF…VLNG.

It belongs to the mitochondrial carrier (TC 2.A.29) family.

Its subcellular location is the mitochondrion inner membrane. Mitochondrial transporter that mediates uptake of thiamine pyrophosphate (ThPP) into mitochondria. The sequence is that of Mitochondrial thiamine pyrophosphate carrier 1 (TPC1) from Meyerozyma guilliermondii (strain ATCC 6260 / CBS 566 / DSM 6381 / JCM 1539 / NBRC 10279 / NRRL Y-324) (Yeast).